A 389-amino-acid polypeptide reads, in one-letter code: Acetylornithine deacetylase (389 aa).

His-85 lines the Zn(2+) pocket. Asp-87 is an active-site residue. Residue Asp-117 coordinates Zn(2+). Glu-149 is a catalytic residue. Positions 150, 174, and 360 each coordinate Zn(2+).

This sequence belongs to the peptidase M20A family. ArgE subfamily. In terms of assembly, homodimer. Requires Zn(2+) as cofactor. Co(2+) serves as cofactor. Glutathione is required as a cofactor.

The protein resides in the cytoplasm. It catalyses the reaction N(2)-acetyl-L-ornithine + H2O = L-ornithine + acetate. The protein operates within amino-acid biosynthesis; L-arginine biosynthesis; L-ornithine from N(2)-acetyl-L-ornithine (linear): step 1/1. In terms of biological role, catalyzes the hydrolysis of the amide bond of N(2)-acetylated L-amino acids. Cleaves the acetyl group from N-acetyl-L-ornithine to form L-ornithine, an intermediate in L-arginine biosynthesis pathway, and a branchpoint in the synthesis of polyamines. The chain is Acetylornithine deacetylase from Yersinia pseudotuberculosis serotype O:1b (strain IP 31758).